The chain runs to 501 residues: Nuclear receptor subfamily 5 group A member 2 (501 aa).

Residues 43–114 constitute a DNA-binding region (nuclear receptor); sequence EELCPVCGDK…KCLSVGMKLE (72 aa). Cys46, Cys49, Cys63, Cys66, Cys82, Cys88, Cys98, and Cys101 together coordinate Zn(2+). 2 NR C4-type zinc fingers span residues 46–66 and 82–106; these read CPVC…CESC and CIEN…FQKC. Residues 112 to 127 form a C-terminal extension (CTE) region; it reads KLEAVRADRMRGGRNK. An FTZ-F1 box motif is present at residues 128–147; that stretch reads FGPMYKRDRALKQQKKALIR. The tract at residues 186-207 is disordered; it reads NHTALPPTDYDRSPFVTSPISM. Residues 260–499 enclose the NR LBD domain; that stretch reads SIPHLILELQ…NLLIEMLHAK (240 aa). Residues 381–384, Tyr476, and Lys480 contribute to the a phospholipid derivative site; that span reads GATL. The segment at 488–499 is AF-2; the sequence is CNNLLIEMLHAK.

This sequence belongs to the nuclear hormone receptor family. NR5 subfamily. Monomer; Binds DNA as a monomer. As to expression, detected in liver and adrenal gland.

The protein localises to the nucleus. The protein resides in the chromosome. Its function is as follows. Orphan nuclear receptor that binds DNA as a monomer to the 5'-TCAAGGCCA-3' sequence and controls expression of target genes: regulates key biological processes, such as cholesterol and bile acid synthesis pathways, as well as cartilage, liver and pancreas morphogenesis. Ligand-binding causes conformational change which causes recruitment of coactivators, promoting target gene activation. The specific ligand is unknown, but specific phospholipids, such as phosphatidylethanolamine, phosphatidylserine, dilauroyl phosphatidylcholine and diundecanoyl phosphatidylcholine can act as ligand in vitro. Acts as a pioneer transcription factor, which unwraps target DNA from histones and elicits local opening of closed chromatin. Involved in the formation of connective tissue in lower jaw. This Gallus gallus (Chicken) protein is Nuclear receptor subfamily 5 group A member 2.